Reading from the N-terminus, the 210-residue chain is ATP-dependent Clp protease proteolytic subunit (210 aa).

S111 functions as the Nucleophile in the catalytic mechanism. H136 is an active-site residue.

Belongs to the peptidase S14 family. In terms of assembly, fourteen ClpP subunits assemble into 2 heptameric rings which stack back to back to give a disk-like structure with a central cavity, resembling the structure of eukaryotic proteasomes.

It localises to the cytoplasm. The enzyme catalyses Hydrolysis of proteins to small peptides in the presence of ATP and magnesium. alpha-casein is the usual test substrate. In the absence of ATP, only oligopeptides shorter than five residues are hydrolyzed (such as succinyl-Leu-Tyr-|-NHMec, and Leu-Tyr-Leu-|-Tyr-Trp, in which cleavage of the -Tyr-|-Leu- and -Tyr-|-Trp bonds also occurs).. Cleaves peptides in various proteins in a process that requires ATP hydrolysis. Has a chymotrypsin-like activity. Plays a major role in the degradation of misfolded proteins. This Halorhodospira halophila (strain DSM 244 / SL1) (Ectothiorhodospira halophila (strain DSM 244 / SL1)) protein is ATP-dependent Clp protease proteolytic subunit.